The following is a 1004-amino-acid chain: Polyhomeotic-like protein 1 (1004 aa).

Low complexity predominate over residues 1 to 22; sequence METESEQNSNSTNGSSSSGGSS. Disordered regions lie at residues 1 to 24, 212 to 241, 261 to 355, 432 to 512, 556 to 589, and 636 to 672; these read METE…SSRP, NQQA…SSLS, SLNL…NLTR, QQQQ…QLGA, RGMP…PPTL, and TLAV…SPKV. Over residues 212-228 the composition is skewed to polar residues; that stretch reads NQQASAQGPQMQGSTQK. A compositionally biased stretch (gly residues) spans 279–303; it reads MGPGGGGQAHGGLGQLPSSGMGGGS. Polar residues-rich tracts occupy residues 319 to 329 and 344 to 355; these read QTVTVSQGSQT and SGQQNVGMNLTR. Over residues 432–447 the composition is skewed to low complexity; it reads QQQQQQQQPQATTLTA. Positions 448 to 458 are enriched in pro residues; that stretch reads PQPPQVPPTQQ. Positions 459–482 are enriched in low complexity; sequence VPPSQSQQQAQTLVVQPMLQSSPL. The segment covering 483 to 495 has biased composition (pro residues); sequence SLPPDAAPKPPIP. Positions 566–583 are enriched in low complexity; it reads QAHLASSPPSSQAPGALQ. The residue at position 645 (Ser-645) is a Phosphoserine. Lys-763 is covalently cross-linked (Glycyl lysine isopeptide (Lys-Gly) (interchain with G-Cter in SUMO2)). An FCS-type zinc finger spans residues 791 to 825; that stretch reads LDKKANLLKCEYCGKYAPAEQFRGSKRFCSMTCAK. Cys-800, Cys-803, Cys-819, and Cys-823 together coordinate Zn(2+). The tract at residues 848 to 928 is disordered; that stretch reads ANYARVRRRG…APPTPELHGI (81 aa). Position 898 is a phosphoserine (Ser-898). The residue at position 922 (Thr-922) is a Phosphothreonine. The SAM domain occupies 940–1004; that stretch reads WSVEEVYEFI…CAKINVLKET (65 aa).

Homodimer. Component of a PRC1-like complex. Interacts with RNF2 and CBX7. Interacts with PHC2, PHC2 and BMI1.

The protein resides in the nucleus. Component of a Polycomb group (PcG) multiprotein PRC1-like complex, a complex class required to maintain the transcriptionally repressive state of many genes, including Hox genes, throughout development. PcG PRC1 complex acts via chromatin remodeling and modification of histones; it mediates monoubiquitination of histone H2A 'Lys-119', rendering chromatin heritably changed in its expressibility. Required for proper control of cellular levels of GMNN expression. The polypeptide is Polyhomeotic-like protein 1 (PHC1) (Homo sapiens (Human)).